A 158-amino-acid polypeptide reads, in one-letter code: MLNQLDNLTERVRGSNKLVYRWLHVRKHLLVAYYNLVGIKPGKESYMRLNEKALDDFCQSLVDYLSAGHFSIYERILHKLEGNGQLARAAKIWPQLEANTQQIMDDYDSSLETAIDHDNYLEFQQVLSDIGEALEARFVLEDKLILLVLDAARVKYPA.

This sequence belongs to the Rsd/AlgQ family. As to quaternary structure, interacts with RpoD.

The protein localises to the cytoplasm. Binds RpoD and negatively regulates RpoD-mediated transcription activation by preventing the interaction between the primary sigma factor RpoD with the catalytic core of the RNA polymerase and with promoter DNA. May be involved in replacement of the RNA polymerase sigma subunit from RpoD to RpoS during the transition from exponential growth to the stationary phase. The protein is Regulator of sigma D of Escherichia coli O127:H6 (strain E2348/69 / EPEC).